A 106-amino-acid chain; its full sequence is uncharacterized protein (106 aa).

This is an uncharacterized protein from Bacillus subtilis (strain 168).